A 32-amino-acid polypeptide reads, in one-letter code: Natriuretic peptide Coa_NP2 (32 aa).

A disulfide bond links Cys-8 and Cys-24.

The protein belongs to the natriuretic peptide family. Snake NP subfamily. As to expression, expressed by the venom gland.

Its subcellular location is the secreted. Its function is as follows. Snake venom natriuretic peptide that exhibits hypotensive and vasorelaxant effects. Produces a dose-dependent hypotension in rats, followed by significant increases in concentrations of markers of nitric oxide (NO) formation measured in the plasma and vasorelaxation in a thoracic aortic ring bath. The peptide may exert its hypotensive action, at least in part, through stimulation of NO production. The vasorelaxant effect is endothelium-dependent and does not appear to be mediated by the natriuretic peptide receptor-A, as its action is not modified by isatin (a potent NPR1 antagonist). May act by activating the natriuretic peptide receptor-B (NPR2). This chain is Natriuretic peptide Coa_NP2, found in Crotalus lutosus abyssus (Grand Canyon rattlesnake).